Here is a 206-residue protein sequence, read N- to C-terminus: uncharacterized protein (206 aa).

Disordered stretches follow at residues 38–88 and 160–206; these read RLQQ…NKNA and HQNT…SVQE. A compositionally biased stretch (low complexity) spans 40 to 73; it reads QQQQQQQQQQQQNRTASSLQQPQQQQPISPPLFL. Position 68 is a phosphoserine (serine 68). Polar residues predominate over residues 78–88; it reads TSENSNLNKNA. Positions 165–186 are enriched in low complexity; that stretch reads SSSNPGSMSSSPPNSASSIFNS. A compositionally biased stretch (polar residues) spans 192–206; it reads PYTSQSFNPLESVQE.

It localises to the cytoplasm. This is an uncharacterized protein from Saccharomyces cerevisiae (strain ATCC 204508 / S288c) (Baker's yeast).